A 37-amino-acid chain; its full sequence is Cytochrome b6-f complex subunit 5 (37 aa).

Residues 5–25 (LLSGIVLGLISITSAGLFVTA) form a helical membrane-spanning segment.

This sequence belongs to the PetG family. In terms of assembly, the 4 large subunits of the cytochrome b6-f complex are cytochrome b6, subunit IV (17 kDa polypeptide, PetD), cytochrome f and the Rieske protein, while the 4 small subunits are PetG, PetL, PetM and PetN. The complex functions as a dimer.

Its subcellular location is the plastid. It localises to the chloroplast thylakoid membrane. Functionally, component of the cytochrome b6-f complex, which mediates electron transfer between photosystem II (PSII) and photosystem I (PSI), cyclic electron flow around PSI, and state transitions. PetG is required for either the stability or assembly of the cytochrome b6-f complex. This is Cytochrome b6-f complex subunit 5 from Psilotum nudum (Whisk fern).